Reading from the N-terminus, the 666-residue chain is Transketolase (666 aa).

Substrate is bound at residue His-28. Thiamine diphosphate contacts are provided by residues His-68 and 116–118; that span reads GPL. Asp-157 is a binding site for Mg(2+). Thiamine diphosphate is bound by residues Gly-158 and Asn-187. Mg(2+) is bound by residues Asn-187 and Ile-189. Residues His-262, Arg-356, and Ser-383 each coordinate substrate. Position 262 (His-262) interacts with thiamine diphosphate. Glu-410 functions as the Proton donor in the catalytic mechanism. Phe-436 provides a ligand contact to thiamine diphosphate. The substrate site is built by His-460, Asp-468, and Arg-519.

The protein belongs to the transketolase family. In terms of assembly, homodimer. Mg(2+) is required as a cofactor. Requires Ca(2+) as cofactor. It depends on Mn(2+) as a cofactor. The cofactor is Co(2+). Thiamine diphosphate serves as cofactor.

It carries out the reaction D-sedoheptulose 7-phosphate + D-glyceraldehyde 3-phosphate = aldehydo-D-ribose 5-phosphate + D-xylulose 5-phosphate. In terms of biological role, catalyzes the transfer of a two-carbon ketol group from a ketose donor to an aldose acceptor, via a covalent intermediate with the cofactor thiamine pyrophosphate. The polypeptide is Transketolase (tkt) (Halalkalibacterium halodurans (strain ATCC BAA-125 / DSM 18197 / FERM 7344 / JCM 9153 / C-125) (Bacillus halodurans)).